The following is a 112-amino-acid chain: DNA-binding protein TON_1102 (112 aa).

It belongs to the PDCD5 family.

The sequence is that of DNA-binding protein TON_1102 from Thermococcus onnurineus (strain NA1).